The sequence spans 332 residues: Putative peptide import ATP-binding protein BMEII0206 (332 aa).

In terms of domain architecture, ABC transporter spans 11 to 261 (LEVSNLSVDF…PLHPYTEGLL (251 aa)). 47–54 (GESGSGKS) serves as a coordination point for ATP.

It belongs to the ABC transporter superfamily. As to quaternary structure, the complex is composed of two ATP-binding proteins (BMEII0205 and BMEII0206), two transmembrane proteins (BMEII0207/BMEII0208 and BMEII0209) and a solute-binding protein (BMEII0210).

The protein localises to the cell inner membrane. In terms of biological role, probably part of an ABC transporter complex that could be involved in peptide import. Probably responsible for energy coupling to the transport system. The protein is Putative peptide import ATP-binding protein BMEII0206 of Brucella melitensis biotype 1 (strain ATCC 23456 / CCUG 17765 / NCTC 10094 / 16M).